A 349-amino-acid polypeptide reads, in one-letter code: GTP 3',8-cyclase (349 aa).

A Radical SAM core domain is found at 24-250 (PFGRAVTYLR…DIPYRTGGPA (227 aa)). R33 lines the GTP pocket. C40 and C44 together coordinate [4Fe-4S] cluster. Y46 serves as a coordination point for S-adenosyl-L-methionine. C47 is a [4Fe-4S] cluster binding site. Position 82 (R82) interacts with GTP. G86 is a binding site for S-adenosyl-L-methionine. Residue T116 participates in GTP binding. S140 is a binding site for S-adenosyl-L-methionine. A GTP-binding site is contributed by K176. M210 serves as a coordination point for S-adenosyl-L-methionine. Residues C273 and C276 each contribute to the [4Fe-4S] cluster site. 278–280 (RVR) is a binding site for GTP. C290 provides a ligand contact to [4Fe-4S] cluster.

Belongs to the radical SAM superfamily. MoaA family. In terms of assembly, monomer and homodimer. The cofactor is [4Fe-4S] cluster.

It carries out the reaction GTP + AH2 + S-adenosyl-L-methionine = (8S)-3',8-cyclo-7,8-dihydroguanosine 5'-triphosphate + 5'-deoxyadenosine + L-methionine + A + H(+). It functions in the pathway cofactor biosynthesis; molybdopterin biosynthesis. In terms of biological role, catalyzes the cyclization of GTP to (8S)-3',8-cyclo-7,8-dihydroguanosine 5'-triphosphate. The polypeptide is GTP 3',8-cyclase (Rhizobium meliloti (strain 1021) (Ensifer meliloti)).